The sequence spans 479 residues: ATP synthase subunit beta, chloroplastic (479 aa).

156–163 (GGAGVGKT) contacts ATP.

Belongs to the ATPase alpha/beta chains family. In terms of assembly, F-type ATPases have 2 components, CF(1) - the catalytic core - and CF(0) - the membrane proton channel. CF(1) has five subunits: alpha(3), beta(3), gamma(1), delta(1), epsilon(1). CF(0) has four main subunits: a(1), b(1), b'(1) and c(9-12).

It is found in the plastid. It localises to the chloroplast thylakoid membrane. The catalysed reaction is ATP + H2O + 4 H(+)(in) = ADP + phosphate + 5 H(+)(out). Produces ATP from ADP in the presence of a proton gradient across the membrane. The catalytic sites are hosted primarily by the beta subunits. This is ATP synthase subunit beta, chloroplastic from Trichomanes davallioides (Kilau fern).